The chain runs to 344 residues: GTPase Obg (344 aa).

Positions 1-12 (MFVDSASFSVSS) are enriched in polar residues. The interval 1–36 (MFVDSASFSVSSGKGGPGCASFRREKHVPLGGPDGG) is disordered. The Obg domain maps to 1–158 (MFVDSASFSV…RNIRLELKLI (158 aa)). Residues 159–341 (ADVGLVGFPN…LKFGLLEILK (183 aa)) enclose the OBG-type G domain. GTP-binding positions include 165 to 172 (GFPNVGKS), 190 to 194 (FTTLT), 212 to 215 (DIPG), 280 to 283 (TRLD), and 322 to 324 (SSV). The Mg(2+) site is built by serine 172 and threonine 192.

It belongs to the TRAFAC class OBG-HflX-like GTPase superfamily. OBG GTPase family. Monomer. Mg(2+) is required as a cofactor.

Its subcellular location is the cytoplasm. An essential GTPase which binds GTP, GDP and possibly (p)ppGpp with moderate affinity, with high nucleotide exchange rates and a fairly low GTP hydrolysis rate. Plays a role in control of the cell cycle, stress response, ribosome biogenesis and in those bacteria that undergo differentiation, in morphogenesis control. This Campylobacter fetus subsp. fetus (strain 82-40) protein is GTPase Obg.